The chain runs to 101 residues: Small ribosomal subunit protein uS14 (101 aa).

The protein belongs to the universal ribosomal protein uS14 family. As to quaternary structure, part of the 30S ribosomal subunit. Contacts proteins S3 and S10.

Its function is as follows. Binds 16S rRNA, required for the assembly of 30S particles and may also be responsible for determining the conformation of the 16S rRNA at the A site. The polypeptide is Small ribosomal subunit protein uS14 (Leifsonia xyli subsp. xyli (strain CTCB07)).